We begin with the raw amino-acid sequence, 832 residues long: Vacuolar transmembrane transporter penV (832 aa).

A run of 2 helical transmembrane segments spans residues 39–59 (LYTQ…AFCI) and 117–137 (FFKF…AIIL). Residues 152–171 (WDNPPGNKTTSPIDGSEKEK) are disordered. Asn158 carries N-linked (GlcNAc...) asparagine glycosylation. Residues 178–198 (YLWIYVLFAYVFSGLAIYMLL) form a helical membrane-spanning segment. Residue Asn214 is glycosylated (N-linked (GlcNAc...) asparagine). The disordered stretch occupies residues 291–322 (NDGNALPLTEQQPRDADDERSGLLSGHDNEHV). Residues 302–321 (QPRDADDERSGLLSGHDNEH) are compositionally biased toward basic and acidic residues. 9 helical membrane passes run 434 to 454 (FVIG…ASLL), 483 to 503 (GLPT…YEWL), 524 to 544 (FFFS…ASGF), 560 to 582 (TIAL…LLIL), 587 to 608 (LFPF…FLSA), 623 to 645 (FSYG…YSVF), 650 to 672 (LICL…QLLY), 687 to 707 (MICN…IGVL), and 713 to 733 (ITRS…SYWF). Residues 754–777 (PGGGDISPSPSSTLSPPSGLDRDS) form a disordered region. Positions 759-771 (ISPSPSSTLSPPS) are enriched in low complexity.

The protein belongs to the CSC1 (TC 1.A.17) family.

The protein resides in the vacuole membrane. Functionally, vacuolar transmembrane transporter that participates in the first stage of the beta-lactam biosynthesis (the formation of the ACV tripeptide), probably taking part in the supply of amino acids from the vacuolar lumen to the vacuole-anchored ACV synthetase. This chain is Vacuolar transmembrane transporter penV, found in Penicillium rubens (strain ATCC 28089 / DSM 1075 / NRRL 1951 / Wisconsin 54-1255) (Penicillium chrysogenum).